The chain runs to 115 residues: MAGFGLPNFGQLTEAFKKAQQIQQNAQKLQEELEVMEIEGTNDDNRAKIWMSGNQKPLRVEIDPSLLSEGKAIIEEAILDAMKSAHEVSTSTMKERMEDLTGGFKLNLPGMGEEN.

The tract at residues 89–115 is disordered; it reads STSTMKERMEDLTGGFKLNLPGMGEEN.

It belongs to the YbaB/EbfC family. Homodimer.

The protein localises to the cytoplasm. It localises to the nucleoid. Binds to DNA and alters its conformation. May be involved in regulation of gene expression, nucleoid organization and DNA protection. This Prochlorococcus marinus (strain NATL2A) protein is Nucleoid-associated protein PMN2A_1347.